Here is a 219-residue protein sequence, read N- to C-terminus: N-(5'-phosphoribosyl)anthranilate isomerase (219 aa).

Belongs to the TrpF family.

The catalysed reaction is N-(5-phospho-beta-D-ribosyl)anthranilate = 1-(2-carboxyphenylamino)-1-deoxy-D-ribulose 5-phosphate. It participates in amino-acid biosynthesis; L-tryptophan biosynthesis; L-tryptophan from chorismate: step 3/5. The polypeptide is N-(5'-phosphoribosyl)anthranilate isomerase (Chloroherpeton thalassium (strain ATCC 35110 / GB-78)).